Here is a 745-residue protein sequence, read N- to C-terminus: Elongation factor G, mitochondrial (745 aa).

A tr-type G domain is found at 40–317 (ERIRNIGISA…AVLDYLPNPG (278 aa)). Residues 49–56 (AHIDSGKT), 116–120 (DTPGH), and 170–173 (NKLD) contribute to the GTP site.

The protein belongs to the TRAFAC class translation factor GTPase superfamily. Classic translation factor GTPase family. EF-G/EF-2 subfamily.

The protein localises to the mitochondrion. It participates in protein biosynthesis; polypeptide chain elongation. In terms of biological role, mitochondrial GTPase that catalyzes the GTP-dependent ribosomal translocation step during translation elongation. During this step, the ribosome changes from the pre-translocational (PRE) to the post-translocational (POST) state as the newly formed A-site-bound peptidyl-tRNA and P-site-bound deacylated tRNA move to the P and E sites, respectively. Catalyzes the coordinated movement of the two tRNA molecules, the mRNA and conformational changes in the ribosome. Essential during development as it acts as a retrograde signal from mitochondria to the nucleus to slow down cell proliferation if mitochondrial energy output is low. This chain is Elongation factor G, mitochondrial, found in Drosophila melanogaster (Fruit fly).